Here is a 356-residue protein sequence, read N- to C-terminus: MILFGSTGSIGVNALKLAALKNIPISALACGDNIALLNEQIARFKPQFVAIKDSKNKHLVKHDRVFIGQEGLEQILTECQDRLLLNAIVGFAGLKSTLKAKELGKNIALANKESLVVAGSFLKGAKFLPIDSEHVALKFLLEGKKNIAKLYITASGGAFYKYKIKDLNQVSVKDALKHPNWNMGAKITIDSATMANKLFEIIEAYHLYDFKESDALIEPRSLVHAMCEFKNGASTAYFSKADMKLAISDAIFEKQDTPILEAVDFSKMPALKFHKISTKKYPIFKLKNAFLKEPNLGVIINAANEVGVYNFLENKSGFLDIAQCIFKALDHFGAPKISSIEEVFEYDFKTREYLRS.

Residues Thr-7, Gly-8, Ser-9, Ile-10, Gly-31, Asn-33, and Asn-111 each coordinate NADPH. Residue Lys-112 participates in 1-deoxy-D-xylulose 5-phosphate binding. Position 113 (Glu-113) interacts with NADPH. Position 131 (Asp-131) interacts with Mn(2+). 1-deoxy-D-xylulose 5-phosphate-binding residues include Ser-132, Glu-133, Ser-155, and His-178. Glu-133 provides a ligand contact to Mn(2+). Gly-184 contributes to the NADPH binding site. The 1-deoxy-D-xylulose 5-phosphate site is built by Ser-191, Asn-196, Lys-197, and Glu-200. Glu-200 is a binding site for Mn(2+).

The protein belongs to the DXR family. Mg(2+) serves as cofactor. Requires Mn(2+) as cofactor.

It catalyses the reaction 2-C-methyl-D-erythritol 4-phosphate + NADP(+) = 1-deoxy-D-xylulose 5-phosphate + NADPH + H(+). The protein operates within isoprenoid biosynthesis; isopentenyl diphosphate biosynthesis via DXP pathway; isopentenyl diphosphate from 1-deoxy-D-xylulose 5-phosphate: step 1/6. In terms of biological role, catalyzes the NADPH-dependent rearrangement and reduction of 1-deoxy-D-xylulose-5-phosphate (DXP) to 2-C-methyl-D-erythritol 4-phosphate (MEP). In Campylobacter jejuni subsp. doylei (strain ATCC BAA-1458 / RM4099 / 269.97), this protein is 1-deoxy-D-xylulose 5-phosphate reductoisomerase.